An 82-amino-acid chain; its full sequence is MDSHFVYIVKCSDGSLYTGYAKDVNARVEKHNRGQGAKYTKVRRPVHLVYQEMYETKSEALKREYEIKTYTRQKKLRLIKER.

A GIY-YIG domain is found at 2–77 (DSHFVYIVKC…KTYTRQKKLR (76 aa)).

The protein belongs to the UPF0213 family.

The sequence is that of UPF0213 protein MW0443 from Staphylococcus aureus (strain MW2).